A 390-amino-acid polypeptide reads, in one-letter code: Serpin B4 (390 aa).

Position 1 is an N-acetylmethionine (Met1).

This sequence belongs to the serpin family. Ov-serpin subfamily. As to expression, squamous cells.

It localises to the cytoplasm. In terms of biological role, may act as a protease inhibitor to modulate the host immune response against tumor cells. The protein is Serpin B4 (SERPINB4) of Homo sapiens (Human).